Consider the following 227-residue polypeptide: MTQMLTWRDALAQEKTLPYFQETLAFVARERAAGMTVYPPAKDVFNAFRFTELNAVKVVILGQDPYHGPNQAHGLSFSVKPGVPAPPSLVNIYKELASDIPGFVIPNHGCLQSWAQQGVMLLNTVLTVEAGKAHSHASLGWETFTDKVIKVLNAQREGIVFLLWGSHAQKKGTIIDPKRHHVLKAPHPSPLSAHRGFLGCRHFSRANALLEQQGQQPIDWTPTLPAA.

D64 functions as the Proton acceptor in the catalytic mechanism.

Belongs to the uracil-DNA glycosylase (UDG) superfamily. UNG family.

It localises to the cytoplasm. The enzyme catalyses Hydrolyzes single-stranded DNA or mismatched double-stranded DNA and polynucleotides, releasing free uracil.. Its function is as follows. Excises uracil residues from the DNA which can arise as a result of misincorporation of dUMP residues by DNA polymerase or due to deamination of cytosine. The polypeptide is Uracil-DNA glycosylase (Sodalis glossinidius (strain morsitans)).